The chain runs to 598 residues: DNA polymerase alpha subunit B (598 aa).

Over residues 112-140 (SYTTPSKGSQKRAISTPETPLTKRSVSTR) the composition is skewed to polar residues. The segment at 112 to 167 (SYTTPSKGSQKRAISTPETPLTKRSVSTRSPHQLLSPSSFSPSATPSQKYNSRSNR) is disordered. At S126 the chain carries Phosphoserine. Phosphothreonine occurs at positions 127 and 130. Phosphoserine is present on residues S141, S147, S152, and S154. Residues 141-158 (SPHQLLSPSSFSPSATPS) are compositionally biased toward low complexity.

Belongs to the DNA polymerase alpha subunit B family. Component of the alpha DNA polymerase complex (also known as the alpha DNA polymerase-primase complex) consisting of four subunits: the catalytic subunit POLA1, the regulatory subunit POLA2, and primase complex subunits PRIM1 and PRIM2 respectively. Within the complex, POLA1 directly interacts with PRIM2/p58. Post-translationally, phosphorylated in a cell cycle-dependent manner, in G2/M phase.

Its subcellular location is the nucleus. Accessory subunit of the DNA polymerase alpha complex (also known as the alpha DNA polymerase-primase complex) which plays an essential role in the initiation of DNA synthesis. During the S phase of the cell cycle, the DNA polymerase alpha complex (composed of a catalytic subunit POLA1, an accessory subunit POLA2 and two primase subunits, the catalytic subunit PRIM1 and the regulatory subunit PRIM2) is recruited to DNA at the replicative forks via direct interactions with MCM10 and WDHD1. The primase subunit of the polymerase alpha complex initiates DNA synthesis by oligomerising short RNA primers on both leading and lagging strands. These primers are initially extended by the polymerase alpha catalytic subunit and subsequently transferred to polymerase delta and polymerase epsilon for processive synthesis on the lagging and leading strand, respectively. The chain is DNA polymerase alpha subunit B (POLA2) from Homo sapiens (Human).